A 238-amino-acid chain; its full sequence is 1-(5-phosphoribosyl)-5-[(5-phosphoribosylamino)methylideneamino] imidazole-4-carboxamide isomerase (238 aa).

Asp-8 acts as the Proton acceptor in catalysis. The Proton donor role is filled by Asp-130.

The protein belongs to the HisA/HisF family.

It localises to the cytoplasm. It carries out the reaction 1-(5-phospho-beta-D-ribosyl)-5-[(5-phospho-beta-D-ribosylamino)methylideneamino]imidazole-4-carboxamide = 5-[(5-phospho-1-deoxy-D-ribulos-1-ylimino)methylamino]-1-(5-phospho-beta-D-ribosyl)imidazole-4-carboxamide. It functions in the pathway amino-acid biosynthesis; L-histidine biosynthesis; L-histidine from 5-phospho-alpha-D-ribose 1-diphosphate: step 4/9. This chain is 1-(5-phosphoribosyl)-5-[(5-phosphoribosylamino)methylideneamino] imidazole-4-carboxamide isomerase, found in Methanococcus maripaludis (strain C5 / ATCC BAA-1333).